We begin with the raw amino-acid sequence, 714 residues long: Calpain-1 catalytic subunit (714 aa).

In terms of domain architecture, Calpain catalytic spans 55–354; the sequence is LFRDEAFPPV…FTRLEICNLT (300 aa). The Ca(2+) site is built by Q109 and D114. Active-site residues include C115, H272, and N296. Ca(2+) contacts are provided by D318 and D323. Phosphothreonine is present on T354. The domain III stretch occupies residues 355 to 526; the sequence is PDALKSQRVR…KKAGTQELDD (172 aa). Residues 527 to 542 form a linker region; sequence QVQAILPDEQVLSEEE. The tract at residues 543–713 is domain IV; the sequence is IDENFKALFR…LFKWLQLTMF (171 aa). EF-hand domains follow at residues 585 to 618, 615 to 650, and 680 to 714; these read FSLE…NRIR, NRIR…AGFK, and VRLE…TMFA. Ca(2+) contacts are provided by D598, D600, N602, K604, E609, D628, D630, S632, S634, and E639.

This sequence belongs to the peptidase C2 family. Forms a heterodimer with a small (regulatory) subunit CAPNS1. The cofactor is Ca(2+). Post-translationally, undergoes calcium-induced successive autoproteolytic cleavages that generate a membrane-bound 78 kDa active form and an intracellular 75 kDa active form. Calpastatin reduces with high efficiency the transition from 78 kDa to 75 kDa calpain forms.

The protein resides in the cytoplasm. Its subcellular location is the cell membrane. It catalyses the reaction Broad endopeptidase specificity.. Its activity is regulated as follows. Activated by micromolar concentrations of calcium and inhibited by calpastatin. Functionally, calcium-regulated non-lysosomal thiol-protease which catalyzes limited proteolysis of substrates involved in cytoskeletal remodeling and signal transduction. Proteolytically cleaves CTBP1. Cleaves and activates caspase-7 (CASP7). The sequence is that of Calpain-1 catalytic subunit from Sus scrofa (Pig).